The primary structure comprises 162 residues: Large ribosomal subunit protein uL30 (162 aa).

It belongs to the universal ribosomal protein uL30 family. As to quaternary structure, part of the 50S ribosomal subunit.

The polypeptide is Large ribosomal subunit protein uL30 (Staphylothermus marinus (strain ATCC 43588 / DSM 3639 / JCM 9404 / F1)).